A 149-amino-acid polypeptide reads, in one-letter code: Urease accessory protein UreE (149 aa).

This sequence belongs to the UreE family.

It is found in the cytoplasm. Functionally, involved in urease metallocenter assembly. Binds nickel. Probably functions as a nickel donor during metallocenter assembly. The polypeptide is Urease accessory protein UreE (Synechococcus sp. (strain JA-3-3Ab) (Cyanobacteria bacterium Yellowstone A-Prime)).